The primary structure comprises 139 residues: Holo-[acyl-carrier-protein] synthase (139 aa).

Mg(2+) is bound by residues Asp8 and Glu57.

The protein belongs to the P-Pant transferase superfamily. AcpS family. It depends on Mg(2+) as a cofactor.

The protein resides in the cytoplasm. It catalyses the reaction apo-[ACP] + CoA = holo-[ACP] + adenosine 3',5'-bisphosphate + H(+). In terms of biological role, transfers the 4'-phosphopantetheine moiety from coenzyme A to a Ser of acyl-carrier-protein. This chain is Holo-[acyl-carrier-protein] synthase, found in Dinoroseobacter shibae (strain DSM 16493 / NCIMB 14021 / DFL 12).